Here is a 202-residue protein sequence, read N- to C-terminus: MAKEIAKSLLDIEAVTLSPNDLYTWSSGIKSPIYCDNRVTLGYPEVRRAIRDGLSQMIIEQFGNVDIVSGTATAGIPHAAYISEKLNLPMNYVRSKSKSHGKQNQIEGAVSKGKKVVVVEDLISTGGSSITAVEALKDAGADVLGVVAIFTYGLKKADDMFNEIDVPFYTLSNYNELIEVAREEGKISENDIQTLVEWRDNL.

5-phospho-alpha-D-ribose 1-diphosphate is bound by residues Arg94, Lys98, His100, and 120 to 128; that span reads EDLISTGGS. Ser124 is a binding site for orotate.

This sequence belongs to the purine/pyrimidine phosphoribosyltransferase family. PyrE subfamily. In terms of assembly, homodimer. Mg(2+) serves as cofactor.

It catalyses the reaction orotidine 5'-phosphate + diphosphate = orotate + 5-phospho-alpha-D-ribose 1-diphosphate. Its pathway is pyrimidine metabolism; UMP biosynthesis via de novo pathway; UMP from orotate: step 1/2. Its function is as follows. Catalyzes the transfer of a ribosyl phosphate group from 5-phosphoribose 1-diphosphate to orotate, leading to the formation of orotidine monophosphate (OMP). The sequence is that of Orotate phosphoribosyltransferase from Staphylococcus haemolyticus (strain JCSC1435).